A 792-amino-acid chain; its full sequence is Zinc finger CCCH domain-containing protein 11A (792 aa).

3 consecutive C3H1-type zinc fingers follow at residues 2–29, 31–57, and 60–87; these read PNQG…HCEA, LGNE…HMEI, and KRSE…HTRS. Disordered regions lie at residues 103-191, 223-331, and 345-443; these read PTVP…VHNG, KKMK…KAGE, and ASQK…RSMQ. At Ser108 the chain carries Phosphoserine. Glycyl lysine isopeptide (Lys-Gly) (interchain with G-Cter in SUMO2) cross-links involve residues Lys114 and Lys124. The span at 115–135 shows a compositional bias: polar residues; that stretch reads TSQLTVQQSKLSVQSNPSPQL. Residue Ser132 is modified to Phosphoserine. Lys140 participates in a covalent cross-link: Glycyl lysine isopeptide (Lys-Gly) (interchain with G-Cter in SUMO2). Phosphoserine is present on residues Ser149, Ser171, and Ser289. The segment covering 160 to 175 has biased composition (acidic residues); the sequence is ADDDEDDDDQFSEEGD. Basic and acidic residues-rich tracts occupy residues 308-331 and 345-360; these read KKVE…KAGE and ASQK…KAEE. The stretch at 338-360 forms a coiled coil; sequence EEILLERASQKRGELQTKLKAEE. Residue Ser346 is modified to Phosphoserine. Positions 367–376 are enriched in low complexity; sequence SPSGTKSSSS. Basic and acidic residues-rich tracts occupy residues 393 to 405 and 431 to 443; these read QQEM…KKDT and QPEE…RSMQ. Lys454 participates in a covalent cross-link: Glycyl lysine isopeptide (Lys-Gly) (interchain with G-Cter in SUMO2). Disordered stretches follow at residues 458–531 and 545–571; these read ALRV…PTKL and QRLQ…ASSY. Polar residues predominate over residues 461 to 473; the sequence is VQQSSESSGNSRP. 2 stretches are compositionally biased toward basic and acidic residues: residues 492–501 and 545–558; these read GVKEEKKCGL and QRLQ…KEKA. A Glycyl lysine isopeptide (Lys-Gly) (interchain with G-Cter in SUMO2) cross-link involves residue Lys601. Residues 690-750 are disordered; the sequence is LSEDKPVTMS…SASTGKPPLS (61 aa). Positions 698 to 715 are enriched in polar residues; sequence MSETENPKDSSVLSSAQA. The segment covering 717-730 has biased composition (low complexity); it reads SEPLLPEGSGPSSS.

In terms of assembly, interacts with TREX complex components THOC2, DDX39 and POLDIP3; the interactions are ATP-dependent. Interacts with PABPN1; this interaction retains ZC3H11A in nuclear speckles. Interacts with KPNA3.

Its subcellular location is the nucleus speckle. Its function is as follows. Through its association with TREX complex components, may participate in the export and post-transcriptional coordination of selected mRNA transcripts, including those required to maintain the metabolic processes in embryonic cells. Binds RNA. In Mus musculus (Mouse), this protein is Zinc finger CCCH domain-containing protein 11A (Zc3h11a).